Reading from the N-terminus, the 329-residue chain is Acetoacetyl CoA synthase NphT7 (329 aa).

Residues Cys-115, His-256, and Asn-286 contribute to the active site.

The protein belongs to the thiolase-like superfamily. FabH family. Homodimer.

The protein localises to the cytoplasm. The enzyme catalyses malonyl-CoA + acetyl-CoA + H(+) = acetoacetyl-CoA + CO2 + CoA. It functions in the pathway metabolic intermediate biosynthesis; (R)-mevalonate biosynthesis. Its function is as follows. Catalyzes the condensation of acetyl-CoA and malonyl-CoA to form acetoacetyl-CoA and CoA. Does not accept malonyl-[acyl-carrier-protein] as a substrate. Can also convert malonyl-CoA into acetyl-CoA via decarboxylation of malonyl-CoA. The chain is Acetoacetyl CoA synthase NphT7 (nphT7) from Streptomyces sp. (strain CL190).